Reading from the N-terminus, the 384-residue chain is Toluene efflux pump periplasmic linker protein TtgA (384 aa).

The first 22 residues, 1-22, serve as a signal peptide directing secretion; sequence MQFKPAVTALVSAVALATLLSG. Residue cysteine 23 is the site of N-palmitoyl cysteine attachment. Cysteine 23 carries the S-diacylglycerol cysteine lipid modification. The stretch at 115 to 155 forms a coiled coil; sequence LAERYKQLIDEQAVSKQEYDDANAKRLQAEASLKSAQIDLR. Positions 362–384 are disordered; that stretch reads ATNVKKPAGPDQANAAKADAKAE. The segment covering 368-378 has biased composition (low complexity); that stretch reads PAGPDQANAAK.

Belongs to the membrane fusion protein (MFP) (TC 8.A.1) family.

Its subcellular location is the cell inner membrane. Functionally, the periplasmic linker protein component of a constitutive organic solvent efflux system. Involved in export of toluene, styrene, m-xylene, propylbenzene and ethylbenzene. Also exports AMP and the antibiotics carbenicillin, nalidixic acid, chloramphenicol and tetracycline. The protein is Toluene efflux pump periplasmic linker protein TtgA (ttgA) of Pseudomonas putida (strain DOT-T1E).